The sequence spans 341 residues: Serine/threonine-protein kinase-like protein At5g23170 (341 aa).

The Protein kinase domain maps to 16–298 (FSPSKLIGKG…FGEITAEIVA (283 aa)). ATP is bound by residues 22–30 (IGKGSHGYV) and Lys-51. The disordered stretch occupies residues 52 to 75 (TPSSLSPSSPSSSSSSKSEQTKKL). The segment covering 53 to 69 (PSSLSPSSPSSSSSSKS) has biased composition (low complexity). The active-site Proton acceptor is the Asp-153. Positions 311 to 332 (MSVLRRVVKLKRRKKRLRETLT) form a coiled coil.

Belongs to the protein kinase superfamily. Ser/Thr protein kinase family. As to expression, ubiquitous. Higher expression in mature stamina and pollen.

It catalyses the reaction L-seryl-[protein] + ATP = O-phospho-L-seryl-[protein] + ADP + H(+). The enzyme catalyses L-threonyl-[protein] + ATP = O-phospho-L-threonyl-[protein] + ADP + H(+). This chain is Serine/threonine-protein kinase-like protein At5g23170, found in Arabidopsis thaliana (Mouse-ear cress).